A 621-amino-acid polypeptide reads, in one-letter code: Probable potassium transport system protein Kup 2 (621 aa).

Transmembrane regions (helical) follow at residues 12-32 (ITVA…LYAL), 52-72 (VLSL…VAII), 101-121 (WIIT…SMIT), 138-158 (PDLK…LFFI), 166-186 (VGKL…ILGL), 213-233 (GLAF…EALY), 249-269 (FGFV…LLLI), 286-306 (ALIP…QAVI), 338-358 (IYVP…VIGF), 370-390 (IAVT…MVLM), 396-416 (LLVA…FAAN), and 420-440 (IPEG…VLTT).

It belongs to the HAK/KUP transporter (TC 2.A.72) family.

It is found in the cell inner membrane. The enzyme catalyses K(+)(in) + H(+)(in) = K(+)(out) + H(+)(out). Functionally, transport of potassium into the cell. Likely operates as a K(+):H(+) symporter. The sequence is that of Probable potassium transport system protein Kup 2 from Dechloromonas aromatica (strain RCB).